A 422-amino-acid polypeptide reads, in one-letter code: Serine protease HTRA2, mitochondrial (422 aa).

The transit peptide at 1-17 (MALRGSHRLQVILKRCI) directs the protein to the mitochondrion. A propeptide spanning residues 18–74 (ASPLFHSHAPNRRSSQPAIKGGEPNSNGNSGHDQQNGERKGKGWRRLVSFFVPFSLG) is cleaved from the precursor. A disordered region spans residues 24-56 (SHAPNRRSSQPAIKGGEPNSNGNSGHDQQNGER). The span at 41–51 (PNSNGNSGHDQ) shows a compositional bias: polar residues. A helical transmembrane segment spans residues 64 to 82 (LVSFFVPFSLGAVVSAAVI). 2 consecutive short sequence motifs (IAP-binding) follow at residues 75-78 (AVVS) and 94-97 (SKMT). The interval 139–302 (SNGSGFIIEQ…IPIDYVKVFL (164 aa)) is serine protease. Catalysis depends on charge relay system residues H157, D189, and S266. The 86-residue stretch at 325–410 (MGITMLTLTP…NLDIVILRGV (86 aa)) folds into the PDZ domain.

This sequence belongs to the peptidase S1C family. As to quaternary structure, interacts with th/DIAP1 (via BIR 2 domain).

Its subcellular location is the mitochondrion intermembrane space. The protein localises to the mitochondrion membrane. It catalyses the reaction Cleavage of non-polar aliphatic amino-acids at the P1 position, with a preference for Val, Ile and Met. At the P2 and P3 positions, Arg is selected most strongly with a secondary preference for other hydrophilic residues.. Its function is as follows. Serine protease that shows proteolytic activity against a non-specific substrate beta-casein. Promotes or induces cell death either by direct binding to and inhibition of BIRC proteins (also called inhibitor of apoptosis proteins, IAPs), leading to an increase in caspase activity, or by a BIRC inhibition-independent, caspase-independent and serine protease activity-dependent mechanism. Can antagonize antiapoptotic activity of th/Diap1 by directly inducing the degradation of th/Diap1. The chain is Serine protease HTRA2, mitochondrial from Drosophila erecta (Fruit fly).